A 724-amino-acid polypeptide reads, in one-letter code: Catalase-peroxidase (724 aa).

Residues Trp-98–Tyr-226 constitute a cross-link (tryptophyl-tyrosyl-methioninium (Trp-Tyr) (with M-252)). Residue His-99 is the Proton acceptor of the active site. The tryptophyl-tyrosyl-methioninium (Tyr-Met) (with W-98) cross-link spans Tyr-226–Met-252. His-267 provides a ligand contact to heme b.

Belongs to the peroxidase family. Peroxidase/catalase subfamily. Homodimer or homotetramer. The cofactor is heme b. Post-translationally, formation of the three residue Trp-Tyr-Met cross-link is important for the catalase, but not the peroxidase activity of the enzyme.

The catalysed reaction is H2O2 + AH2 = A + 2 H2O. It catalyses the reaction 2 H2O2 = O2 + 2 H2O. Its function is as follows. Bifunctional enzyme with both catalase and broad-spectrum peroxidase activity. This Vibrio cholerae serotype O1 (strain ATCC 39315 / El Tor Inaba N16961) protein is Catalase-peroxidase.